The primary structure comprises 880 residues: Valine--tRNA ligase (880 aa).

Residues 48–58 (PNVTGKLHLGH) carry the 'HIGH' region motif. Positions 524–528 (KMSKS) match the 'KMSKS' region motif. K527 contacts ATP. Residues 808–879 (LAGLINIEEE…VKERIAQLRS (72 aa)) are a coiled coil.

The protein belongs to the class-I aminoacyl-tRNA synthetase family. ValS type 1 subfamily. As to quaternary structure, monomer.

It localises to the cytoplasm. It carries out the reaction tRNA(Val) + L-valine + ATP = L-valyl-tRNA(Val) + AMP + diphosphate. In terms of biological role, catalyzes the attachment of valine to tRNA(Val). As ValRS can inadvertently accommodate and process structurally similar amino acids such as threonine, to avoid such errors, it has a 'posttransfer' editing activity that hydrolyzes mischarged Thr-tRNA(Val) in a tRNA-dependent manner. The polypeptide is Valine--tRNA ligase (Enterococcus faecalis (strain ATCC 700802 / V583)).